The following is a 180-amino-acid chain: Large ribosomal subunit protein uL22 (180 aa).

Disordered stretches follow at residues 1-20 and 160-180; these read MTKP…CKSR and PKPA…EISA. The segment covering 8-20 has biased composition (polar residues); sequence KTPSNPEKSCKSR.

This sequence belongs to the universal ribosomal protein uL22 family.

This Dictyostelium discoideum (Social amoeba) protein is Large ribosomal subunit protein uL22 (rpl17).